The sequence spans 32 residues: Alcohol dehydrogenase-related 31 kDa protein (32 aa).

11 to 32 serves as a coordination point for NAD(+); the sequence is YVADCGGIALETSXVLMTKNIA.

The protein belongs to the short-chain dehydrogenases/reductases (SDR) family.

This is Alcohol dehydrogenase-related 31 kDa protein (Adhr) from Drosophila yakuba (Fruit fly).